The chain runs to 361 residues: Beta-hexosaminidase (361 aa).

Residues Asp-69, Arg-77, Arg-144, and Lys-174–His-175 contribute to the substrate site. The active-site Proton donor/acceptor is His-187. Asp-258 serves as the catalytic Nucleophile.

The protein belongs to the glycosyl hydrolase 3 family. NagZ subfamily.

Its subcellular location is the cytoplasm. The catalysed reaction is Hydrolysis of terminal non-reducing N-acetyl-D-hexosamine residues in N-acetyl-beta-D-hexosaminides.. Its pathway is cell wall biogenesis; peptidoglycan recycling. Functionally, plays a role in peptidoglycan recycling by cleaving the terminal beta-1,4-linked N-acetylglucosamine (GlcNAc) from peptide-linked peptidoglycan fragments, giving rise to free GlcNAc, anhydro-N-acetylmuramic acid and anhydro-N-acetylmuramic acid-linked peptides. The sequence is that of Beta-hexosaminidase from Neisseria meningitidis serogroup B (strain ATCC BAA-335 / MC58).